Here is a 505-residue protein sequence, read N- to C-terminus: Ion-translocating oxidoreductase complex subunit C (505 aa).

2 4Fe-4S ferredoxin-type domains span residues 381–410 (ELNN…EQLY) and 420–449 (KTQI…MSYY). Positions 390, 393, 396, 400, 429, 432, 435, and 439 each coordinate [4Fe-4S] cluster.

This sequence belongs to the 4Fe4S bacterial-type ferredoxin family. RnfC subfamily. In terms of assembly, the complex is composed of six subunits: RnfA, RnfB, RnfC, RnfD, RnfE and RnfG. It depends on [4Fe-4S] cluster as a cofactor.

It is found in the cell inner membrane. Functionally, part of a membrane-bound complex that couples electron transfer with translocation of ions across the membrane. This Buchnera aphidicola subsp. Baizongia pistaciae (strain Bp) protein is Ion-translocating oxidoreductase complex subunit C.